The following is a 181-amino-acid chain: Ribonuclease HII (181 aa).

Residues 1–181 form the RNase H type-2 domain; sequence MICGIDEVGR…SLHRKSFRLI (181 aa). A divalent metal cation contacts are provided by D6, E7, and D98.

It belongs to the RNase HII family. It depends on Mn(2+) as a cofactor. Requires Mg(2+) as cofactor.

The protein resides in the cytoplasm. The catalysed reaction is Endonucleolytic cleavage to 5'-phosphomonoester.. Its function is as follows. Endonuclease that specifically degrades the RNA of RNA-DNA hybrids. The polypeptide is Ribonuclease HII (Borrelia recurrentis (strain A1)).